The chain runs to 843 residues: Glycogen phosphorylase, brain form (843 aa).

At alanine 2 the chain carries N-acetylalanine. Phosphoserine; by PHK; in form phosphorylase A is present on serine 15. Aspartate 43, tyrosine 197, and arginine 310 together coordinate AMP. The residue at position 197 (tyrosine 197) is a Phosphotyrosine. Tyrosine 473 is modified (phosphotyrosine). Serine 524 carries the phosphoserine modification. Lysine 569 contacts pyridoxal 5'-phosphate. The interval 677-678 is pyridoxal 5'-phosphate; it reads TG. Lysine 681 is modified (N6-(pyridoxal phosphate)lysine).

Belongs to the glycogen phosphorylase family. As to quaternary structure, homodimer. Dimers associate into a tetramer to form the enzymatically active phosphorylase A. Pyridoxal 5'-phosphate serves as cofactor. In terms of processing, phosphorylation of Ser-15 converts phosphorylase B (unphosphorylated) to phosphorylase A.

It carries out the reaction [(1-&gt;4)-alpha-D-glucosyl](n) + phosphate = [(1-&gt;4)-alpha-D-glucosyl](n-1) + alpha-D-glucose 1-phosphate. Its activity is regulated as follows. Activity of phosphorylase is controlled both by allosteric means (through the non-covalent binding of metabolites) and by covalent modification. Thus AMP allosterically activates, whereas ATP, ADP, and glucose-6-phosphate allosterically inhibit, phosphorylase B. Its function is as follows. Glycogen phosphorylase that regulates glycogen mobilization. Phosphorylase is an important allosteric enzyme in carbohydrate metabolism. Enzymes from different sources differ in their regulatory mechanisms and in their natural substrates. However, all known phosphorylases share catalytic and structural properties. The protein is Glycogen phosphorylase, brain form (Pygb) of Mus musculus (Mouse).